Consider the following 245-residue polypeptide: 1-(5-phosphoribosyl)-5-[(5-phosphoribosylamino)methylideneamino] imidazole-4-carboxamide isomerase (245 aa).

Catalysis depends on D7, which acts as the Proton acceptor. The active-site Proton donor is the D129.

This sequence belongs to the HisA/HisF family.

The protein localises to the cytoplasm. The enzyme catalyses 1-(5-phospho-beta-D-ribosyl)-5-[(5-phospho-beta-D-ribosylamino)methylideneamino]imidazole-4-carboxamide = 5-[(5-phospho-1-deoxy-D-ribulos-1-ylimino)methylamino]-1-(5-phospho-beta-D-ribosyl)imidazole-4-carboxamide. The protein operates within amino-acid biosynthesis; L-histidine biosynthesis; L-histidine from 5-phospho-alpha-D-ribose 1-diphosphate: step 4/9. The sequence is that of 1-(5-phosphoribosyl)-5-[(5-phosphoribosylamino)methylideneamino] imidazole-4-carboxamide isomerase from Yersinia pestis bv. Antiqua (strain Antiqua).